Consider the following 684-residue polypeptide: PAN2-PAN3 deadenylation complex subunit PAN3 (684 aa).

Disordered stretches follow at residues 1–38, 68–97, and 112–146; these read MLPPPKSAAVQIVRPPSPSSEKAKEKEKKHSPEKRETA, DPSTPQNSSPVAHAPTPSAPTPLAGTPARE, and VPKGLDSSPRASTPSVPTPSAPTPPVWPSLPSTGL. The span at 21 to 38 shows a compositional bias: basic and acidic residues; sequence EKAKEKEKKHSPEKRETA. Residues 36–65 form a C3H1-type zinc finger; it reads ETAQRICRNVMIYGYCKYQDQGCIYYHPPA. Positions 127-139 are enriched in pro residues; that stretch reads VPTPSAPTPPVWP. Residues 263-544 are pseudokinase domain; the sequence is GANGASAPGL…SIDEVVKMMG (282 aa). Residues Arg326 and 375-382 each bind ATP; that span reads DYHPLSTT. The tract at residues 387–412 is disordered; it reads YLSPNPPEPSPASALANQPPKRRSSP. Residue 444-445 participates in ATP binding; it reads SK. A coiled-coil region spans residues 545-583; that stretch reads PRILNELDAVQSYADVLENELGAEVENGRIVRLLTKLGF. Residues 584 to 684 form a knob domain region; that stretch reads INERAEFELD…NAGNNHRVHR (101 aa).

Belongs to the protein kinase superfamily. PAN3 family. As to quaternary structure, homodimer. Forms a heterotrimer with a catalytic subunit PAN2 to form the poly(A)-nuclease (PAN) deadenylation complex. Interacts (via PAM-2 motif) with poly(A)-binding protein PAB1 (via PABC domain), conferring substrate specificity of the enzyme complex.

Its subcellular location is the cytoplasm. Regulatory subunit of the poly(A)-nuclease (PAN) deadenylation complex, one of two cytoplasmic mRNA deadenylases involved in mRNA turnover. PAN specifically shortens poly(A) tails of RNA and the activity is stimulated by poly(A)-binding protein PAB1. PAN deadenylation is followed by rapid degradation of the shortened mRNA tails by the CCR4-NOT complex. Deadenylated mRNAs are then degraded by two alternative mechanisms, namely exosome-mediated 3'-5' exonucleolytic degradation, or deadenylation-dependent mRNA decaping and subsequent 5'-3' exonucleolytic degradation by XRN1. May also be involved in post-transcriptional maturation of mRNA poly(A) tails. PAN3 acts as a positive regulator for PAN activity, recruiting the catalytic subunit PAN2 to mRNA via its interaction with RNA and with PAB1. The chain is PAN2-PAN3 deadenylation complex subunit PAN3 from Cryptococcus neoformans var. neoformans serotype D (strain B-3501A) (Filobasidiella neoformans).